The primary structure comprises 524 residues: MECVGARNFAAMAVSTFPSWSCRRKFPVVKRYSYRNIRFGLCSVRASGGGSSGSESCVAVREDFADEEDFVKAGGSEILFVQMQQNKDMDEQSKLVDKLPPISIGDGALDLVVIGCGPAGLALAAESAKLGLKVGLIGPDLPFTNNYGVWEDEFNDLGLQKCIEHVWRETIVYLDDDKPITIGRAYGRVSRRLLHEELLRRCVESGVSYLSSKVDSITEASDGLRLVACDDNNVIPCRLATVASGAASGKLLQYEVGGPRVCVQTAYGVEVEVENSPYDPDQMVFMDYRDYTNEKVRSLEAEYPTFLYAMPMTKSRLFFEETCLASKDVMPFDLLKTKLMLRLDTLGIRILKTYEEEWSYIPVGGSLPNTEQKNLAFGAAASMVHPATGYSVVRSLSEAPKYASVIAEILREETTKQINSNISRQAWDTLWPPERKRQRAFFLFGLALIVQFDTEGIRSFFRTFFRLPKWMWQGFLGSTLTSGDLVLFALYMFVISPNNLRKGLINHLISDPTGATMIKTYLKV.

The transit peptide at M1 to R45 directs the protein to the chloroplast. Residue L111 to P139 coordinates NAD(+). A run of 2 helical transmembrane segments spans residues F441 to F461 and F475 to I495.

This sequence belongs to the lycopene cyclase family.

Its subcellular location is the plastid. It localises to the chloroplast membrane. It carries out the reaction a carotenoid psi-end group = a carotenoid epsilon-end group. It participates in carotenoid biosynthesis; alpha-zeacarotene biosynthesis. Its pathway is carotenoid biosynthesis; delta-carotene biosynthesis. In terms of biological role, involved in carotenoid biosynthesis. Catalyzes the single epsilon-cyclization reaction which converts lycopene to delta-carotene and neurosporene to alpha-zeacarotene. Required for lutein biosynthesis. The sequence is that of Lycopene epsilon cyclase, chloroplastic from Arabidopsis thaliana (Mouse-ear cress).